Here is a 532-residue protein sequence, read N- to C-terminus: Muscarinic acetylcholine receptor M5 (532 aa).

The Extracellular segment spans residues 1-29 (MEGDSYHNATTVNGTPVNHQPLERHRLWE). N-linked (GlcNAc...) asparagine glycosylation occurs at Asn-8. A helical transmembrane segment spans residues 30–53 (VITIAAVTAVVSLITIVGNVLVMI). Over 54–66 (SFKVNSQLKTVNN) the chain is Cytoplasmic. A helical membrane pass occupies residues 67-87 (YYLLSLACADLIIGIFSMNLY). Over 88–104 (TTYILMGRWALGSLACD) the chain is Extracellular. A disulfide bridge links Cys-103 with Cys-183. Residues 105–126 (LWLALDYVASNASVMNLLVISF) form a helical membrane-spanning segment. Topologically, residues 127–146 (DRYFSITRPLTYRAKRTPKR) are cytoplasmic. The chain crosses the membrane as a helical span at residues 147 to 169 (AGIMIGLAWLISFILWAPAILCW). The Extracellular segment spans residues 170-191 (QYLVGKRTVPLDECQIQFLSEP). A helical transmembrane segment spans residues 192 to 214 (TITFGTAIAAFYIPVSVMTILYC). The Cytoplasmic portion of the chain corresponds to 215-443 (RIYRETEKRT…LVKERKAAQT (229 aa)). The segment at 262–294 (AQRERNQASWSSSRRSTSTTGKPSQATGPSANW) is disordered. The segment covering 270 to 281 (SWSSSRRSTSTT) has biased composition (low complexity). Residues 282–291 (GKPSQATGPS) show a composition bias toward polar residues. A helical transmembrane segment spans residues 444–464 (LSAILLAFIITWTPYNIMVLV). The Extracellular segment spans residues 465-478 (STFCDKCVPVTLWH). A helical transmembrane segment spans residues 479 to 498 (LGYWLCYVNSTVNPICYALC). Topologically, residues 499–532 (NRTFRKTFKMLLLCRWKKKKVEEKLYWQGNSKLP) are cytoplasmic. Phosphothreonine occurs at positions 501 and 505.

Belongs to the G-protein coupled receptor 1 family. Muscarinic acetylcholine receptor subfamily. CHRM5 sub-subfamily.

Its subcellular location is the cell membrane. The protein localises to the postsynaptic cell membrane. Functionally, the muscarinic acetylcholine receptor mediates various cellular responses, including inhibition of adenylate cyclase, breakdown of phosphoinositides and modulation of potassium channels through the action of G proteins. Primary transducing effect is Pi turnover. In Homo sapiens (Human), this protein is Muscarinic acetylcholine receptor M5 (CHRM5).